The sequence spans 507 residues: Phosphoprotein (507 aa).

An interaction with N0 region spans residues 1-48 (MAEEQARHVKNGLECIRALKAEPIGSLAIGEAMAAWSEISDNPGQERA). Disordered regions lie at residues 42–91 (NPGQ…DDTE), 133–163 (SGLD…TEGY), 201–227 (NNFP…SETP), 252–273 (TQCA…GNVP), and 285–307 (WTPE…GDHY). Serine 86 and serine 151 each carry phosphoserine. Residues 144 to 160 (GDNESENSDVDIGEPDT) show a composition bias toward acidic residues. The span at 260-270 (SEPSGPGAPAG) shows a compositional bias: low complexity. Positions 286–301 (TPESGTTISPRSQNNK) are enriched in polar residues. The tract at residues 304 to 376 (GDHYDDELFS…LSSIMIAIPG (73 aa)) is multimerization. 2 interaction with the L polymerase regions span residues 361-377 (STLE…IPGL) and 396-410 (PIIG…AEVL). A x domain (XD) region spans residues 457-507 (GPVSRSVIRSIIKSSRIEEDRKRYLMTLLDDIKGANDLSKFHQMLMKIIMK). The segment at 459–507 (VSRSVIRSIIKSSRIEEDRKRYLMTLLDDIKGANDLSKFHQMLMKIIMK) is interaction with the nucleocapsid (N-RNA).

It belongs to the morbillivirus P protein family. As to quaternary structure, homotetramer. Interacts (via multimerization domain and XD domain) with polymerase L; this interaction forms the polymerase L-P complex. Interacts (via N-terminus) with N0 (via Ncore); this interaction allows P to chaperon N0 to avoid N polymerization and non-specific RNA binding before encapsidation. Interacts (via C-terminus) with N-RNA template (via Ntail); this interaction maintains the P/L complex anchored to the nucleocapsid template during the sequential transcription. Interacts (via C-terminus) with protein C this interaction allows C to associate with the ribonucleocapsid. In terms of processing, phosphorylation on serines by host CK2 is necessary for the formation of viral factories.

Functionally, essential cofactor of the RNA polymerase L that plays a central role in the transcription and replication by forming the polymerase complex with RNA polymerase L and recruiting L to the genomic N-RNA template for RNA synthesis. Also plays a central role in the encapsidation of nascent RNA chains by forming the encapsidation complex with the nucleocapsid protein N (N-P complex). Acts as a chaperone for newly synthesized free N protein, so-called N0, allowing encapsidation of nascent RNA chains during replication. The nucleoprotein protein N prevents excessive phosphorylation of P, which leads to down-regulation of viral transcription/ replication. Participates, together with N, in the formation of viral factories (viroplasms), which are large inclusions in the host cytoplasm where replication takes place. This is Phosphoprotein (P/V) from Homo sapiens (Human).